A 392-amino-acid chain; its full sequence is Probable nucleoredoxin 3 (392 aa).

Thioredoxin domains are found at residues 17–171 (LYSI…DSKR) and 177–326 (EKLL…ELKA).

This sequence belongs to the nucleoredoxin family.

It catalyses the reaction [protein]-dithiol + NAD(+) = [protein]-disulfide + NADH + H(+). The catalysed reaction is [protein]-dithiol + NADP(+) = [protein]-disulfide + NADPH + H(+). Its function is as follows. Probable thiol-disulfide oxidoreductase that may participate in various redox reactions. The sequence is that of Probable nucleoredoxin 3 from Arabidopsis thaliana (Mouse-ear cress).